Consider the following 80-residue polypeptide: Clavanin-A (80 aa).

The signal sequence occupies residues 1–19 (MKTTILILLILGLGINAKS). A propeptide spanning residues 20 to 29 (LEERKSEEEK) is cleaved from the precursor. Phenylalanine amide is present on F52. Residues 54-80 (DDQQDNGKFYGHYAEDNGKHWYDTGDQ) constitute a propeptide that is removed on maturation.

The protein resides in the secreted. Has antimicrobial activity. In Styela clava (Sea squirt), this protein is Clavanin-A.